The following is a 488-amino-acid chain: Cobyric acid synthase (488 aa).

In terms of domain architecture, GATase cobBQ-type spans Lys254–Gln442. Cys336 acts as the Nucleophile in catalysis. His434 is a catalytic residue.

It belongs to the CobB/CobQ family. CobQ subfamily.

The protein operates within cofactor biosynthesis; adenosylcobalamin biosynthesis. Its function is as follows. Catalyzes amidations at positions B, D, E, and G on adenosylcobyrinic A,C-diamide. NH(2) groups are provided by glutamine, and one molecule of ATP is hydrogenolyzed for each amidation. This is Cobyric acid synthase from Beijerinckia indica subsp. indica (strain ATCC 9039 / DSM 1715 / NCIMB 8712).